Reading from the N-terminus, the 141-residue chain is Cholinesterase (141 aa).

N39 carries N-linked (GlcNAc...) asparagine glycosylation. Substrate is bound at residue 49–50 (GS). Residue S131 is the Acyl-ester intermediate of the active site. Position 131 is a phosphoserine (S131).

The protein belongs to the type-B carboxylesterase/lipase family. In terms of assembly, homotetramer; disulfide-linked. Dimer of dimers. In terms of tissue distribution, present in most cells except erythrocytes.

It localises to the secreted. It catalyses the reaction an acylcholine + H2O = a carboxylate + choline + H(+). Its function is as follows. Esterase with broad substrate specificity. Contributes to the inactivation of the neurotransmitter acetylcholine. Can degrade neurotoxic organophosphate esters. The sequence is that of Cholinesterase (BCHE) from Ovis aries (Sheep).